We begin with the raw amino-acid sequence, 417 residues long: NADH-quinone oxidoreductase subunit D (417 aa).

It belongs to the complex I 49 kDa subunit family. NDH-1 is composed of 14 different subunits. Subunits NuoB, C, D, E, F, and G constitute the peripheral sector of the complex.

Its subcellular location is the cell inner membrane. The enzyme catalyses a quinone + NADH + 5 H(+)(in) = a quinol + NAD(+) + 4 H(+)(out). Functionally, NDH-1 shuttles electrons from NADH, via FMN and iron-sulfur (Fe-S) centers, to quinones in the respiratory chain. The immediate electron acceptor for the enzyme in this species is believed to be ubiquinone. Couples the redox reaction to proton translocation (for every two electrons transferred, four hydrogen ions are translocated across the cytoplasmic membrane), and thus conserves the redox energy in a proton gradient. This chain is NADH-quinone oxidoreductase subunit D, found in Azoarcus sp. (strain BH72).